The sequence spans 267 residues: Type III pantothenate kinase (267 aa).

6-13 lines the ATP pocket; it reads DSGNSRLK. Residues Tyr-96 and 103–106 each bind substrate; that span reads GADR. Asp-105 functions as the Proton acceptor in the catalytic mechanism. Thr-131 provides a ligand contact to ATP. Position 181 (Thr-181) interacts with substrate.

This sequence belongs to the type III pantothenate kinase family. Homodimer. It depends on NH4(+) as a cofactor. The cofactor is K(+).

The protein resides in the cytoplasm. It carries out the reaction (R)-pantothenate + ATP = (R)-4'-phosphopantothenate + ADP + H(+). It participates in cofactor biosynthesis; coenzyme A biosynthesis; CoA from (R)-pantothenate: step 1/5. Functionally, catalyzes the phosphorylation of pantothenate (Pan), the first step in CoA biosynthesis. In terms of biological role, activates transcription of the pertussis toxin operon in a BvgAS-dependent manner. May interact with the alpha subunit of RNA polymerase. The chain is Type III pantothenate kinase (coaX) from Bordetella pertussis (strain Tohama I / ATCC BAA-589 / NCTC 13251).